Reading from the N-terminus, the 160-residue chain is MRCPSCSSLDTQVKDSRPTEDSSVIRRRRVCLACNFRFTTFERVQLRELTVIKRNGRRVPFDRDKLVRSLQISLRKRPVDPERLEEMVSAVVRELESGGESEISSEAIGEIVMEHLRKLDDVAYVRFASVYRNFREAKDFEAVLGELSSDELARAALLRK.

Residues 1–11 (MRCPSCSSLDT) are compositionally biased toward polar residues. A disordered region spans residues 1–20 (MRCPSCSSLDTQVKDSRPTE). Residues 3–34 (CPSCSSLDTQVKDSRPTEDSSVIRRRRVCLAC) fold into a zinc finger. Positions 49 to 139 (LTVIKRNGRR…VYRNFREAKD (91 aa)) constitute an ATP-cone domain.

Belongs to the NrdR family. Requires Zn(2+) as cofactor.

Negatively regulates transcription of bacterial ribonucleotide reductase nrd genes and operons by binding to NrdR-boxes. This chain is Transcriptional repressor NrdR, found in Rhodopseudomonas palustris (strain BisA53).